Reading from the N-terminus, the 241-residue chain is Eukaryotic translation initiation factor 3 subunit J (241 aa).

Positions 1 to 94 (MDVSWDADNF…EKTAEEMTPE (94 aa)) are disordered. Positions 26-45 (GEDEDDNVKESWEDEEEEKK) are enriched in acidic residues. Positions 61–118 (KKKIHDKIAERERQEREKAERLVTEKTAEEMTPEQKLAEKLRQQKLQEESDLRLAMET) form a coiled coil. Positions 66 to 89 (DKIAERERQEREKAERLVTEKTAE) are enriched in basic and acidic residues.

Belongs to the eIF-3 subunit J family. As to quaternary structure, component of the eukaryotic translation initiation factor 3 (eIF-3) complex.

Its subcellular location is the cytoplasm. Functionally, component of the eukaryotic translation initiation factor 3 (eIF-3) complex, which is involved in protein synthesis of a specialized repertoire of mRNAs and, together with other initiation factors, stimulates binding of mRNA and methionyl-tRNAi to the 40S ribosome. The eIF-3 complex specifically targets and initiates translation of a subset of mRNAs involved in cell proliferation. The sequence is that of Eukaryotic translation initiation factor 3 subunit J from Bombyx mori (Silk moth).